The chain runs to 315 residues: 4-hydroxy-3-methylbut-2-enyl diphosphate reductase (315 aa).

C12 lines the [4Fe-4S] cluster pocket. Positions 40 and 74 each coordinate (2E)-4-hydroxy-3-methylbut-2-enyl diphosphate. 2 residues coordinate dimethylallyl diphosphate: H40 and H74. H40 and H74 together coordinate isopentenyl diphosphate. Position 96 (C96) interacts with [4Fe-4S] cluster. H124 is a binding site for (2E)-4-hydroxy-3-methylbut-2-enyl diphosphate. H124 provides a ligand contact to dimethylallyl diphosphate. H124 is an isopentenyl diphosphate binding site. The Proton donor role is filled by E126. A (2E)-4-hydroxy-3-methylbut-2-enyl diphosphate-binding site is contributed by T167. C213 lines the [4Fe-4S] cluster pocket. Residues S241, S242, N243, and S290 each contribute to the (2E)-4-hydroxy-3-methylbut-2-enyl diphosphate site. Dimethylallyl diphosphate is bound by residues S241, S242, N243, and S290. Isopentenyl diphosphate is bound by residues S241, S242, N243, and S290.

The protein belongs to the IspH family. Requires [4Fe-4S] cluster as cofactor.

The catalysed reaction is isopentenyl diphosphate + 2 oxidized [2Fe-2S]-[ferredoxin] + H2O = (2E)-4-hydroxy-3-methylbut-2-enyl diphosphate + 2 reduced [2Fe-2S]-[ferredoxin] + 2 H(+). It catalyses the reaction dimethylallyl diphosphate + 2 oxidized [2Fe-2S]-[ferredoxin] + H2O = (2E)-4-hydroxy-3-methylbut-2-enyl diphosphate + 2 reduced [2Fe-2S]-[ferredoxin] + 2 H(+). It participates in isoprenoid biosynthesis; dimethylallyl diphosphate biosynthesis; dimethylallyl diphosphate from (2E)-4-hydroxy-3-methylbutenyl diphosphate: step 1/1. Its pathway is isoprenoid biosynthesis; isopentenyl diphosphate biosynthesis via DXP pathway; isopentenyl diphosphate from 1-deoxy-D-xylulose 5-phosphate: step 6/6. Catalyzes the conversion of 1-hydroxy-2-methyl-2-(E)-butenyl 4-diphosphate (HMBPP) into a mixture of isopentenyl diphosphate (IPP) and dimethylallyl diphosphate (DMAPP). Acts in the terminal step of the DOXP/MEP pathway for isoprenoid precursor biosynthesis. This chain is 4-hydroxy-3-methylbut-2-enyl diphosphate reductase, found in Chloroherpeton thalassium (strain ATCC 35110 / GB-78).